A 1372-amino-acid polypeptide reads, in one-letter code: Capping protein, Arp2/3 and myosin-I linker protein 3 (1372 aa).

The disordered stretch occupies residues 126–151 (RGNADTPEGPRDTSPNSETSTSTTHS). Residues 138-151 (TSPNSETSTSTTHS) are compositionally biased toward low complexity. LRR repeat units follow at residues 244–264 (SLEE…QKLA), 274–295 (VLHA…SLSQ), 303–323 (GLTK…QALG), 335–357 (SLRY…NALY), 365–385 (ALVH…LGAL), 392–413 (HLTY…EAPP), 424–444 (TLSH…RALL), 455–475 (DLHL…ALQE), 482–501 (CVGS…LTLV), and 509–530 (SLKH…EEIL). Disordered stretches follow at residues 865 to 900 (TLSD…ELGT), 970 to 1003 (KLRH…RQEN), and 1024 to 1372 (ESSS…PGTD). Positions 982 to 995 (PRTTPPGPGRPSMP) are enriched in pro residues. Residues 1040–1073 (SEAPLPPLQKKRRRGLFHFRRPRSFKGDRGPGSP) are necessary for localization at the cell membrane. The span at 1048–1063 (QKKRRRGLFHFRRPRS) shows a compositional bias: basic residues. Residues 1079-1098 (LPPPPPPPPTQESPPSPDPP) are compositionally biased toward pro residues. The span at 1099–1109 (SLGNNSSPCWS) shows a compositional bias: low complexity. 2 stretches are compositionally biased toward basic and acidic residues: residues 1163–1177 (ERAK…REGP) and 1219–1229 (RRAEATWHIAE). A compositionally biased stretch (polar residues) spans 1233 to 1244 (PNHSCQSPSPAS). Basic and acidic residues predominate over residues 1348-1361 (QSCDKLEPDRRRPP).

Belongs to the CARMIL family. As to expression, widely expressed, with much higher levels in fetal tissues than in adult ones. Up-regulated in certain cancer tissues.

The protein resides in the cytoplasm. It is found in the cell membrane. The chain is Capping protein, Arp2/3 and myosin-I linker protein 3 from Homo sapiens (Human).